The chain runs to 251 residues: MLGREDIRTYQVYLANEKKLAPGSIHIALSALRFFFNVTLERDWAPEEVLPLPKKPQKLPIILSPDEVQHFLGCVADVKHHAILTTCYAAGLRISEAVQLKPTDIDSQRMVVRVEHGKGQKDRYVMLSPKLLEILRDYWRMWRPEAWLFPGDRAGHPITRYAVGQACVKPHDLSRLSKPVTPHSLRHAFVVHLLEAGADVRTIQPLLGHRSLATTAHYLRIATNKVCATESPFELLPRPAPTPPPSKPQYF.

The Core-binding (CB) domain maps to 1-40 (MLGREDIRTYQVYLANEKKLAPGSIHIALSALRFFFNVTL). The 174-residue stretch at 58 to 231 (KLPIILSPDE…ATNKVCATES (174 aa)) folds into the Tyr recombinase domain. Active-site residues include arginine 93, lysine 118, histidine 183, arginine 186, and histidine 209. Tyrosine 218 acts as the O-(3'-phospho-DNA)-tyrosine intermediate in catalysis.

This sequence belongs to the 'phage' integrase family.

The chain is Putative integrase/recombinase y4eF from Sinorhizobium fredii (strain NBRC 101917 / NGR234).